A 293-amino-acid polypeptide reads, in one-letter code: Phosphatidylcholine-sterol acyltransferase (293 aa).

An N-linked (GlcNAc...) asparagine glycan is attached at Asn-26. Ser-123 functions as the Nucleophile in the catalytic mechanism. A glycan (N-linked (GlcNAc...) asparagine) is linked at Asn-179. The cysteines at positions 220 and 263 are disulfide-linked. Asp-252 acts as the Charge relay system in catalysis. Asn-280 carries an N-linked (GlcNAc...) asparagine glycan. The active-site Charge relay system is the His-284.

This sequence belongs to the AB hydrolase superfamily. Lipase family.

The protein localises to the secreted. The enzyme catalyses a sterol + a 1,2-diacyl-sn-glycero-3-phosphocholine = a sterol ester + a 1-acyl-sn-glycero-3-phosphocholine. Its activity is regulated as follows. APOA1 is the most potent activator in plasma. Also activated by APOE, APOC1 and APOA4. Functionally, central enzyme in the extracellular metabolism of plasma lipoproteins. Synthesized mainly in the liver and secreted into plasma where it converts cholesterol and phosphatidylcholines (lecithins) to cholesteryl esters and lysophosphatidylcholines on the surface of high and low density lipoproteins (HDLs and LDLs). The cholesterol ester is then transported back to the liver. Has a preference for plasma 16:0-18:2 or 18:O-18:2 phosphatidylcholines. Also produced in the brain by primary astrocytes, and esterifies free cholesterol on nascent APOE-containing lipoproteins secreted from glia and influences cerebral spinal fluid (CSF) APOE- and APOA1 levels. Together with APOE and the cholesterol transporter ABCA1, plays a key role in the maturation of glial-derived, nascent lipoproteins. Required for remodeling high-density lipoprotein particles into their spherical forms. This is Phosphatidylcholine-sterol acyltransferase (LCAT) from Gerbilliscus gambianus (Gambian gerbil).